Consider the following 306-residue polypeptide: GTP cyclohydrolase FolE2 (306 aa).

The protein belongs to the GTP cyclohydrolase IV family.

It catalyses the reaction GTP + H2O = 7,8-dihydroneopterin 3'-triphosphate + formate + H(+). It participates in cofactor biosynthesis; 7,8-dihydroneopterin triphosphate biosynthesis; 7,8-dihydroneopterin triphosphate from GTP: step 1/1. In terms of biological role, converts GTP to 7,8-dihydroneopterin triphosphate. This Xanthomonas oryzae pv. oryzae (strain MAFF 311018) protein is GTP cyclohydrolase FolE2.